A 199-amino-acid polypeptide reads, in one-letter code: uncharacterized protein (199 aa).

To U.parvum UU376.

This is an uncharacterized protein from Ureaplasma parvum serovar 3 (strain ATCC 700970).